The chain runs to 565 residues: NAD-dependent malic enzyme (565 aa).

The active-site Proton donor is tyrosine 104. Arginine 157 lines the NAD(+) pocket. Lysine 175 acts as the Proton acceptor in catalysis. The a divalent metal cation site is built by glutamate 246, aspartate 247, and aspartate 270. NAD(+) is bound by residues aspartate 270 and asparagine 418.

The protein belongs to the malic enzymes family. In terms of assembly, homotetramer. The cofactor is Mg(2+). Requires Mn(2+) as cofactor.

It carries out the reaction (S)-malate + NAD(+) = pyruvate + CO2 + NADH. It catalyses the reaction oxaloacetate + H(+) = pyruvate + CO2. This chain is NAD-dependent malic enzyme, found in Escherichia coli O6:H1 (strain CFT073 / ATCC 700928 / UPEC).